A 240-amino-acid polypeptide reads, in one-letter code: Fibronectin type III domain-containing protein 5 (240 aa).

Over residues 1–10 the composition is skewed to gly residues; it reads MQAARGGAGR. The disordered stretch occupies residues 1-30; it reads MQAARGGAGRPGREGRGLERECERSPGVGA. The span at 11 to 24 shows a compositional bias: basic and acidic residues; the sequence is PGREGRGLERECER. Positions 64-155 constitute a Fibronectin type-III domain; that stretch reads APVNVTVRHL…EPVLFKTPRE (92 aa). Asn67 and Asn112 each carry an N-linked (GlcNAc...) asparagine glycan. The helical transmembrane segment at 181–201 threads the bilayer; sequence GEVLIIVVVLFMWAGVIALFC. The segment covering 210–221 has biased composition (basic and acidic residues); that stretch reads NEPNNNKEKTKS. The interval 210 to 240 is disordered; it reads NEPNNNKEKTKSASETSTPEHQGGGLLRSKI. The segment covering 231–240 has biased composition (gly residues); sequence QGGGLLRSKI. Residues 238 to 240 carry the Microbody targeting signal motif; sequence SKI.

In terms of assembly, dimer; may exist in other oligomeric forms. In terms of processing, N-Glycosylated. The extracellular domain is cleaved and released from the cell membrane.

The protein resides in the cell membrane. It localises to the peroxisome membrane. Its subcellular location is the secreted. Mediates beneficial effects of muscular exercise. Induces browning of white adipose tissue by stimulating UCP1 expression, at least in part, via the nuclear receptor PPARA. This is Fibronectin type III domain-containing protein 5 (Fndc5) from Rattus norvegicus (Rat).